The chain runs to 500 residues: Histidine ammonia-lyase (500 aa).

The segment at residues 141–143 (ASG) is a cross-link (5-imidazolinone (Ala-Gly)). Ser-142 carries the post-translational modification 2,3-didehydroalanine (Ser).

It belongs to the PAL/histidase family. Contains an active site 4-methylidene-imidazol-5-one (MIO), which is formed autocatalytically by cyclization and dehydration of residues Ala-Ser-Gly.

It is found in the cytoplasm. The enzyme catalyses L-histidine = trans-urocanate + NH4(+). It functions in the pathway amino-acid degradation; L-histidine degradation into L-glutamate; N-formimidoyl-L-glutamate from L-histidine: step 1/3. This chain is Histidine ammonia-lyase, found in Shouchella clausii (strain KSM-K16) (Alkalihalobacillus clausii).